Here is a 224-residue protein sequence, read N- to C-terminus: Aminopyrimidine aminohydrolase (224 aa).

D44 is a binding site for substrate. The Nucleophile role is filled by C135. The substrate site is built by Y139 and Y165. Catalysis depends on E207, which acts as the Proton donor.

It belongs to the TenA family. In terms of assembly, homotetramer.

The catalysed reaction is 4-amino-5-aminomethyl-2-methylpyrimidine + H2O = 4-amino-5-hydroxymethyl-2-methylpyrimidine + NH4(+). The enzyme catalyses thiamine + H2O = 5-(2-hydroxyethyl)-4-methylthiazole + 4-amino-5-hydroxymethyl-2-methylpyrimidine + H(+). Its pathway is cofactor biosynthesis; thiamine diphosphate biosynthesis. Catalyzes an amino-pyrimidine hydrolysis reaction at the C5' of the pyrimidine moiety of thiamine compounds, a reaction that is part of a thiamine salvage pathway. Thus, catalyzes the conversion of 4-amino-5-aminomethyl-2-methylpyrimidine to 4-amino-5-hydroxymethyl-2-methylpyrimidine (HMP). To a lesser extent, is also able to catalyze the hydrolytic cleavage of thiamine; however, this thiaminase activity is unlikely to be physiologically relevant. Therefore, is involved in the regeneration of the thiamine pyrimidine from thiamine degraded products present in the environment, rather than in thiamine degradation. This chain is Aminopyrimidine aminohydrolase, found in Halalkalibacterium halodurans (strain ATCC BAA-125 / DSM 18197 / FERM 7344 / JCM 9153 / C-125) (Bacillus halodurans).